The chain runs to 849 residues: Disks large homolog 3 (849 aa).

Positions 32–101 (DWQVPDPYGP…GKSTPKLNGS (70 aa)) are disordered. Residues 41 to 53 (PSGGNGASSGYGG) are compositionally biased toward gly residues. Polar residues predominate over residues 57–69 (QTLPSQAGATPTP). 3 PDZ domains span residues 149–235 (EIVL…VRRR), 244–330 (EVNL…VAKP), and 404–484 (KIIL…AQYR). Phosphoserine is present on serine 157. Residues 519–589 (KRSLYVRALF…PSKKRVEKKE (71 aa)) enclose the SH3 domain. A Guanylate kinase-like domain is found at 659 to 834 (ARPVIILGPM…IYNKIKQIIE (176 aa)). At tyrosine 705 the chain carries Phosphotyrosine.

The protein belongs to the MAGUK family. In terms of assembly, interacts through its PDZ domains with NETO1, GRIN2B, SYNGAP1 and APC. Interacts through its first two PDZ domains with ERBB4. Interacts through its third PDZ domain with NLGN1, and probably with NLGN2 and NLGN3. Interacts through its guanylate kinase-like domain with DLGAP1, DLGAP2, DLGAP3 and DLGAP4. Interacts with FRMPD4 (via C-terminus). Interacts with LRFN1, LRFN2 and LRFN4. Interacts with FLTP. Interacts with GPR85. Interacts with DGKI (via PDZ-binding motif).

Functionally, required for learning most likely through its role in synaptic plasticity following NMDA receptor signaling. In Mus musculus (Mouse), this protein is Disks large homolog 3 (Dlg3).